The following is an 85-amino-acid chain: DNA-directed RNA polymerase subunit omega (85 aa).

The protein belongs to the RNA polymerase subunit omega family. The RNAP catalytic core consists of 2 alpha, 1 beta, 1 beta' and 1 omega subunit. When a sigma factor is associated with the core the holoenzyme is formed, which can initiate transcription.

It carries out the reaction RNA(n) + a ribonucleoside 5'-triphosphate = RNA(n+1) + diphosphate. Promotes RNA polymerase assembly. Latches the N- and C-terminal regions of the beta' subunit thereby facilitating its interaction with the beta and alpha subunits. The sequence is that of DNA-directed RNA polymerase subunit omega from Tropheryma whipplei (strain TW08/27) (Whipple's bacillus).